Here is a 358-residue protein sequence, read N- to C-terminus: DNA replication and repair protein RecF (358 aa).

ATP is bound at residue 30–37 (GNNGSGKT).

This sequence belongs to the RecF family.

The protein localises to the cytoplasm. Functionally, the RecF protein is involved in DNA metabolism; it is required for DNA replication and normal SOS inducibility. RecF binds preferentially to single-stranded, linear DNA. It also seems to bind ATP. This Histophilus somni (strain 2336) (Haemophilus somnus) protein is DNA replication and repair protein RecF.